A 606-amino-acid polypeptide reads, in one-letter code: Proton myo-inositol cotransporter hmit-1.1 (606 aa).

At 1-20 (MVAVAAFSSSGQDKPAHTPK) the chain is on the cytoplasmic side. The chain crosses the membrane as a helical span at residues 21–41 (LGLFVYILAAASVIGGFLFGY). Residues 42-63 (DTSVVSAAMLYMPDAPGLKPMD) are Extracellular-facing. A helical transmembrane segment spans residues 64–84 (TVWQEVLVSISPGMAAVGSLM). At 85 to 96 (SGTSSDYIGRRK) the chain is on the cytoplasmic side. Residues 97 to 117 (VILGASAIFTIGALVCAASVN) traverse the membrane as a helical segment. Residue K118 is a topological domain, extracellular. The chain crosses the membrane as a helical span at residues 119–139 (IMLLVGRVLLGIAIGFASMIV). Residues 140 to 152 (PVYLGETAPTHVR) are Cytoplasmic-facing. Residues 153–173 (GMLVAAFALMISFGQVVANIT) traverse the membrane as a helical segment. Residues 174-188 (GGAFSYIDPYNVGWR) lie on the Extracellular side of the membrane. Residues 189–209 (LMFAFAAVPSIIQFVCFMFLP) traverse the membrane as a helical segment. Residues 210–278 (ETPRWLYENG…RILKTPHVLK (69 aa)) lie on the Cytoplasmic side of the membrane. The chain crosses the membrane as a helical span at residues 279–299 (ACFIGSMLQAFQQLAGINTIL). Residues 300 to 317 (YYTADIIRSSGISNNHTT) lie on the Extracellular side of the membrane. Residue N314 is glycosylated (N-linked (GlcNAc...) asparagine). The helical transmembrane segment at 318 to 338 (IWISVLLSLCNFIGPFVPMSL) threads the bilayer. The Cytoplasmic segment spans residues 339–345 (IEKVGRR). The helical transmembrane segment at 346–366 (IIFLFSCGLVVLSLVFIGVAF) threads the bilayer. The Extracellular segment spans residues 367–464 (LLVNHDSAAT…EKYYCDTKYT (98 aa)). N-linked (GlcNAc...) asparagine glycans are attached at residues N387 and N445. A helical transmembrane segment spans residues 465–485 (LLPIIACGVYLLTFSSGFTSL). Residues 486 to 501 (PWVLNSEFYPMWARST) lie on the Cytoplasmic side of the membrane. The chain crosses the membrane as a helical span at residues 502 to 522 (CVAISTTSNWVFNLIIALTYL). Residues 523–531 (SLTQVIGKY) are Extracellular-facing. A helical transmembrane segment spans residues 532 to 552 (GAFWLYAGLTVIAFIFILFLV). Residues 553–606 (PETKGYSIEEVEMLFMNKKQRREAESRRRETVTEVRSRMNSTVSFGQHNEVHKY) are Cytoplasmic-facing.

It belongs to the major facilitator superfamily. Sugar transporter (TC 2.A.1.1) family. As to expression, expressed in the intestine.

Its subcellular location is the cell membrane. It carries out the reaction myo-inositol(out) + H(+)(out) = myo-inositol(in) + H(+)(in). Functionally, h(+)-myo-inositol cotransporter. Probably by promoting the transport of myo-inositol regulates intracellular osmosis in response to hyperosmotic stress. The chain is Proton myo-inositol cotransporter hmit-1.1 from Caenorhabditis elegans.